Consider the following 663-residue polypeptide: DNA ligase (663 aa).

Residues 33–37, 82–83, and Glu-112 each bind NAD(+); these read DYSYD and SI. The N6-AMP-lysine intermediate role is filled by Lys-114. NAD(+) contacts are provided by Arg-135, Glu-171, Lys-285, and Lys-309. Residues Cys-403, Cys-406, Cys-419, and Cys-424 each coordinate Zn(2+). One can recognise a BRCT domain in the interval 581–663; sequence DKEAPLQGKV…LRILDAKSVS (83 aa).

The protein belongs to the NAD-dependent DNA ligase family. LigA subfamily. Mg(2+) serves as cofactor. It depends on Mn(2+) as a cofactor.

It carries out the reaction NAD(+) + (deoxyribonucleotide)n-3'-hydroxyl + 5'-phospho-(deoxyribonucleotide)m = (deoxyribonucleotide)n+m + AMP + beta-nicotinamide D-nucleotide.. Its function is as follows. DNA ligase that catalyzes the formation of phosphodiester linkages between 5'-phosphoryl and 3'-hydroxyl groups in double-stranded DNA using NAD as a coenzyme and as the energy source for the reaction. It is essential for DNA replication and repair of damaged DNA. In Chlamydia trachomatis serovar A (strain ATCC VR-571B / DSM 19440 / HAR-13), this protein is DNA ligase.